A 394-amino-acid chain; its full sequence is NAD(P)H-quinone oxidoreductase subunit H (394 aa).

It belongs to the complex I 49 kDa subunit family. As to quaternary structure, NDH-1 can be composed of about 15 different subunits; different subcomplexes with different compositions have been identified which probably have different functions.

The protein localises to the cellular thylakoid membrane. The enzyme catalyses a plastoquinone + NADH + (n+1) H(+)(in) = a plastoquinol + NAD(+) + n H(+)(out). The catalysed reaction is a plastoquinone + NADPH + (n+1) H(+)(in) = a plastoquinol + NADP(+) + n H(+)(out). NDH-1 shuttles electrons from an unknown electron donor, via FMN and iron-sulfur (Fe-S) centers, to quinones in the respiratory and/or the photosynthetic chain. The immediate electron acceptor for the enzyme in this species is believed to be plastoquinone. Couples the redox reaction to proton translocation, and thus conserves the redox energy in a proton gradient. Cyanobacterial NDH-1 also plays a role in inorganic carbon-concentration. The chain is NAD(P)H-quinone oxidoreductase subunit H from Synechococcus sp. (strain RCC307).